The chain runs to 299 residues: Ribosomal RNA small subunit methyltransferase H (299 aa).

S-adenosyl-L-methionine is bound by residues 24–26 (GGH), Asp-43, Phe-68, Asp-90, and Gln-97.

It belongs to the methyltransferase superfamily. RsmH family.

It is found in the cytoplasm. It catalyses the reaction cytidine(1402) in 16S rRNA + S-adenosyl-L-methionine = N(4)-methylcytidine(1402) in 16S rRNA + S-adenosyl-L-homocysteine + H(+). Specifically methylates the N4 position of cytidine in position 1402 (C1402) of 16S rRNA. This is Ribosomal RNA small subunit methyltransferase H from Francisella tularensis subsp. tularensis (strain WY96-3418).